The primary structure comprises 274 residues: Large ribosomal subunit protein uL2 (274 aa).

Positions 224-274 are disordered; it reads AMNPVDHPHGGGEGRTGEGQVPVSPWNTMTKGYRTRSNKRTQTFIVSRRKK. Basic and acidic residues predominate over residues 229–239; sequence DHPHGGGEGRT.

The protein belongs to the universal ribosomal protein uL2 family. Part of the 50S ribosomal subunit. Forms a bridge to the 30S subunit in the 70S ribosome.

In terms of biological role, one of the primary rRNA binding proteins. Required for association of the 30S and 50S subunits to form the 70S ribosome, for tRNA binding and peptide bond formation. It has been suggested to have peptidyltransferase activity; this is somewhat controversial. Makes several contacts with the 16S rRNA in the 70S ribosome. The sequence is that of Large ribosomal subunit protein uL2 from Methylibium petroleiphilum (strain ATCC BAA-1232 / LMG 22953 / PM1).